The sequence spans 127 residues: Small ribosomal subunit protein uS12 (127 aa).

A 3-methylthioaspartic acid modification is found at Asp-89. The disordered stretch occupies residues 101–127 (ALDTSGVAGRTQRRSKYGAKRPKEAKK). A compositionally biased stretch (basic residues) spans 111 to 127 (TQRRSKYGAKRPKEAKK).

This sequence belongs to the universal ribosomal protein uS12 family. As to quaternary structure, part of the 30S ribosomal subunit. Contacts proteins S8 and S17. May interact with IF1 in the 30S initiation complex.

With S4 and S5 plays an important role in translational accuracy. In terms of biological role, interacts with and stabilizes bases of the 16S rRNA that are involved in tRNA selection in the A site and with the mRNA backbone. Located at the interface of the 30S and 50S subunits, it traverses the body of the 30S subunit contacting proteins on the other side and probably holding the rRNA structure together. The combined cluster of proteins S8, S12 and S17 appears to hold together the shoulder and platform of the 30S subunit. The sequence is that of Small ribosomal subunit protein uS12 from Flavobacterium johnsoniae (strain ATCC 17061 / DSM 2064 / JCM 8514 / BCRC 14874 / CCUG 350202 / NBRC 14942 / NCIMB 11054 / UW101) (Cytophaga johnsonae).